Consider the following 355-residue polypeptide: UDP-3-O-acylglucosamine N-acyltransferase (355 aa).

Residue H258 is the Proton acceptor of the active site.

It belongs to the transferase hexapeptide repeat family. LpxD subfamily. As to quaternary structure, homotrimer.

The catalysed reaction is a UDP-3-O-[(3R)-3-hydroxyacyl]-alpha-D-glucosamine + a (3R)-hydroxyacyl-[ACP] = a UDP-2-N,3-O-bis[(3R)-3-hydroxyacyl]-alpha-D-glucosamine + holo-[ACP] + H(+). The protein operates within bacterial outer membrane biogenesis; LPS lipid A biosynthesis. Its function is as follows. Catalyzes the N-acylation of UDP-3-O-acylglucosamine using 3-hydroxyacyl-ACP as the acyl donor. Is involved in the biosynthesis of lipid A, a phosphorylated glycolipid that anchors the lipopolysaccharide to the outer membrane of the cell. This chain is UDP-3-O-acylglucosamine N-acyltransferase, found in Bradyrhizobium sp. (strain BTAi1 / ATCC BAA-1182).